The primary structure comprises 228 residues: C-type lectin domain-containing protein 88 (228 aa).

A signal peptide spans 1 to 18 (MQFIFFGTLFSGLLLVCA). An O-linked (Xyl...) (chondroitin sulfate) serine glycan is attached at S27. In terms of domain architecture, C-type lectin spans 88–218 (YSDSCYWVET…CTYLFYSICE (131 aa)). Intrachain disulfides connect C109–C217 and C188–C209. The N-linked (GlcNAc...) asparagine glycan is linked to N220.

This chain is C-type lectin domain-containing protein 88, found in Caenorhabditis elegans.